Consider the following 78-residue polypeptide: Major outer membrane lipoprotein Lpp (78 aa).

The first 20 residues, 1–20, serve as a signal peptide directing secretion; the sequence is MNRTKLVLGAVILASTMLAG. A lipid anchor (N-palmitoyl cysteine) is attached at Cys-21. Cys-21 carries S-diacylglycerol cysteine lipidation. 2 consecutive repeats follow at residues 24-34 and 38-48; these read NAKIDQLSSDV and NAKVDQLSNDV. Residues 27 to 75 adopt a coiled-coil conformation; sequence IDQLSSDVQTLNAKVDQLSNDVNAVRADVQAAKDDAARANQRLDNQAQA. Lys-78 carries the N6-murein peptidoglycan lysine modification.

This sequence belongs to the Lpp family. As to quaternary structure, homotrimer.

Its subcellular location is the cell outer membrane. It localises to the secreted. The protein localises to the cell wall. Its function is as follows. A highly abundant outer membrane lipoprotein that controls the distance between the inner and outer membranes. The only protein known to be covalently linked to the peptidoglycan network (PGN). Also non-covalently binds the PGN. The link between the cell outer membrane and PGN contributes to maintenance of the structural and functional integrity of the cell envelope, and maintains the correct distance between the PGN and the outer membrane. This chain is Major outer membrane lipoprotein Lpp, found in Yersinia pestis.